Here is a 225-residue protein sequence, read N- to C-terminus: uncharacterized protein (225 aa).

Positions 166–214 constitute a PCI domain; the sequence is LNSDVIKDKILAIIENVGEITYEELAEKINIPEEDLEKYLSELKESGDI.

This is an uncharacterized protein from Methanocaldococcus jannaschii (strain ATCC 43067 / DSM 2661 / JAL-1 / JCM 10045 / NBRC 100440) (Methanococcus jannaschii).